Consider the following 598-residue polypeptide: Proline--tRNA ligase (598 aa).

Belongs to the class-II aminoacyl-tRNA synthetase family. ProS type 1 subfamily. In terms of assembly, homodimer.

The protein resides in the cytoplasm. The catalysed reaction is tRNA(Pro) + L-proline + ATP = L-prolyl-tRNA(Pro) + AMP + diphosphate. Its function is as follows. Catalyzes the attachment of proline to tRNA(Pro) in a two-step reaction: proline is first activated by ATP to form Pro-AMP and then transferred to the acceptor end of tRNA(Pro). As ProRS can inadvertently accommodate and process non-cognate amino acids such as alanine and cysteine, to avoid such errors it has two additional distinct editing activities against alanine. One activity is designated as 'pretransfer' editing and involves the tRNA(Pro)-independent hydrolysis of activated Ala-AMP. The other activity is designated 'posttransfer' editing and involves deacylation of mischarged Ala-tRNA(Pro). The misacylated Cys-tRNA(Pro) is not edited by ProRS. The polypeptide is Proline--tRNA ligase (Rippkaea orientalis (strain PCC 8801 / RF-1) (Cyanothece sp. (strain PCC 8801))).